The primary structure comprises 339 residues: Phytoene synthase (339 aa).

This sequence belongs to the phytoene/squalene synthase family. Requires ATP as cofactor. It depends on Mn(2+) as a cofactor. Mg(2+) serves as cofactor.

Its pathway is carotenoid biosynthesis; phytoene biosynthesis. In terms of biological role, involved in the biosynthesis of carotenoids. Catalyzes the condensation of two molecules of geranylgeranyl diphosphate (GGPP) to give prephytoene diphosphate (PPPP) and the subsequent rearrangement of the cyclopropylcarbinyl intermediate to yield phytoene. This chain is Phytoene synthase (crtB), found in Rhodobacter capsulatus (strain ATCC BAA-309 / NBRC 16581 / SB1003).